The chain runs to 182 residues: Autophagy-related protein 31 (182 aa).

Residues L105–E134 form a disordered region.

It is found in the cytoplasm. It localises to the cytoskeleton. The protein localises to the preautophagosomal structure. Plays a role in starvation-induced autophagy. Involved in mitophagy. Functions with ATG17 and ATG29 at the preautophagosomal structure (PAS) in order to form normal autophagosomes under starvation conditions. May be involved in microtubule function, such as chromosome segregation and karyogamy. The protein is Autophagy-related protein 31 (CIS1) of Candida glabrata (strain ATCC 2001 / BCRC 20586 / JCM 3761 / NBRC 0622 / NRRL Y-65 / CBS 138) (Yeast).